The primary structure comprises 184 residues: Photosystem I assembly protein Ycf4 (184 aa).

The next 2 membrane-spanning stretches (helical) occupy residues 22–42 (FCWA…GISS) and 57–77 (IVFF…LFIS).

This sequence belongs to the Ycf4 family.

It localises to the plastid. Its subcellular location is the chloroplast thylakoid membrane. In terms of biological role, seems to be required for the assembly of the photosystem I complex. This is Photosystem I assembly protein Ycf4 from Coffea arabica (Arabian coffee).